The sequence spans 337 residues: Large ribosomal subunit protein uL10 (337 aa).

Positions 309–337 (EEVVEEQEEVKEEEEEESDMASGLGALFG) are disordered. Positions 310–327 (EVVEEQEEVKEEEEEESD) are enriched in acidic residues.

Belongs to the universal ribosomal protein uL10 family. As to quaternary structure, part of the 50S ribosomal subunit. Forms part of the ribosomal stalk which helps the ribosome interact with GTP-bound translation factors. Forms a heptameric L10(L12)2(L12)2(L12)2 complex, where L10 forms an elongated spine to which the L12 dimers bind in a sequential fashion.

Forms part of the ribosomal stalk, playing a central role in the interaction of the ribosome with GTP-bound translation factors. The polypeptide is Large ribosomal subunit protein uL10 (Methanococcoides burtonii (strain DSM 6242 / NBRC 107633 / OCM 468 / ACE-M)).